Here is a 142-residue protein sequence, read N- to C-terminus: Hemoglobin subunit alpha (142 aa).

The Globin domain maps to 1 to 142; sequence GLTAADKTLI…VEKALFETYR (142 aa). H59 contacts O2. Position 88 (H88) interacts with heme b.

It belongs to the globin family. As to quaternary structure, heterotetramer of two alpha chains and two beta chains (an easy dimerization is also reported). In terms of tissue distribution, red blood cells.

Its function is as follows. Involved in oxygen transport from the lung to the various peripheral tissues. The chain is Hemoglobin subunit alpha (HBA) from Latimeria chalumnae (Coelacanth).